A 499-amino-acid chain; its full sequence is Taxadiene 5-alpha hydroxylase (499 aa).

Residues 22–42 (TESFSIALSAIAGILLLLLLF) form a helical; Signal-anchor membrane-spanning segment. Residue Cys-445 participates in heme binding.

The protein belongs to the cytochrome P450 family. The cofactor is heme.

The protein localises to the membrane. It catalyses the reaction taxa-4(5),11(12)-diene + reduced [NADPH--hemoprotein reductase] + O2 = taxa-4(20),11-dien-5alpha-ol + oxidized [NADPH--hemoprotein reductase] + H2O + H(+). Its pathway is alkaloid biosynthesis; taxol biosynthesis; taxa-4(20),11-dien-5alpha-ol from geranylgeranyl diphosphate: step 2/2. In terms of biological role, catalyzes the first oxygenation step of taxol biosynthesis. Can use both taxa-4(5),11(12)-diene and taxa-4(20),11(12)-diene as substrate. This Taxus cuspidata (Japanese yew) protein is Taxadiene 5-alpha hydroxylase.